We begin with the raw amino-acid sequence, 162 residues long: Photosystem II extrinsic protein V (162 aa).

Residues 1–26 form the signal peptide; the sequence is MFNKNFWTSIIIGCLFCTITYSGVNA. 4 residues coordinate heme c: Cys-62, Cys-65, His-66, and His-117.

The protein belongs to the cytochrome c family. PsbV subfamily. PSII is composed of 1 copy each of membrane proteins PsbA, PsbB, PsbC, PsbD, PsbE, PsbF, PsbH, PsbI, PsbJ, PsbK, PsbL, PsbM, PsbT, PsbX, PsbY, PsbZ, Psb30/Ycf12, at least 3 peripheral proteins of the oxygen-evolving complex and a large number of cofactors. It forms dimeric complexes. Heme c is required as a cofactor.

The protein localises to the plastid. It is found in the cyanelle thylakoid membrane. Functionally, one of the extrinsic, lumenal subunits of photosystem II (PSII). PSII is a light-driven water plastoquinone oxidoreductase, using light energy to abstract electrons from H(2)O, generating a proton gradient subsequently used for ATP formation. The extrinsic proteins stabilize the structure of photosystem II oxygen-evolving complex (OEC), the ion environment of oxygen evolution and protect the OEC against heat-induced inactivation. In Cyanophora paradoxa, this protein is Photosystem II extrinsic protein V.